The chain runs to 295 residues: N-acetylmuramic acid 6-phosphate etherase (295 aa).

Residues 54–217 (VIAAFRRGGR…STASMVGIGK (164 aa)) enclose the SIS domain. The active-site Proton donor is the Glu-82. Glu-113 is a catalytic residue.

Belongs to the GCKR-like family. MurNAc-6-P etherase subfamily. In terms of assembly, homodimer.

It catalyses the reaction N-acetyl-D-muramate 6-phosphate + H2O = N-acetyl-D-glucosamine 6-phosphate + (R)-lactate. The protein operates within amino-sugar metabolism; N-acetylmuramate degradation. Specifically catalyzes the cleavage of the D-lactyl ether substituent of MurNAc 6-phosphate, producing GlcNAc 6-phosphate and D-lactate. The polypeptide is N-acetylmuramic acid 6-phosphate etherase (Geobacillus thermodenitrificans (strain NG80-2)).